A 378-amino-acid chain; its full sequence is Phosphoserine aminotransferase (378 aa).

Arginine 53 lines the L-glutamate pocket. Pyridoxal 5'-phosphate-binding residues include tryptophan 117, threonine 167, aspartate 190, and glutamine 213. Lysine 214 is modified (N6-(pyridoxal phosphate)lysine). 255–256 (NT) is a pyridoxal 5'-phosphate binding site.

Belongs to the class-V pyridoxal-phosphate-dependent aminotransferase family. SerC subfamily. As to quaternary structure, homodimer. Pyridoxal 5'-phosphate is required as a cofactor.

It localises to the cytoplasm. It catalyses the reaction O-phospho-L-serine + 2-oxoglutarate = 3-phosphooxypyruvate + L-glutamate. The enzyme catalyses 4-(phosphooxy)-L-threonine + 2-oxoglutarate = (R)-3-hydroxy-2-oxo-4-phosphooxybutanoate + L-glutamate. It functions in the pathway amino-acid biosynthesis; L-serine biosynthesis; L-serine from 3-phospho-D-glycerate: step 2/3. The protein operates within cofactor biosynthesis; pyridoxine 5'-phosphate biosynthesis; pyridoxine 5'-phosphate from D-erythrose 4-phosphate: step 3/5. Functionally, catalyzes the reversible conversion of 3-phosphohydroxypyruvate to phosphoserine and of 3-hydroxy-2-oxo-4-phosphonooxybutanoate to phosphohydroxythreonine. The polypeptide is Phosphoserine aminotransferase (Ralstonia pickettii (strain 12J)).